Reading from the N-terminus, the 882-residue chain is Valine--tRNA ligase (882 aa).

The 'HIGH' region motif lies at 48 to 58 (PNVTGKLHLGH). Positions 524-528 (KMSKS) match the 'KMSKS' region motif. Residue lysine 527 coordinates ATP. A coiled-coil region spans residues 809–882 (LAELLDLDEE…KRLAELKAAR (74 aa)). The disordered stretch occupies residues 844 to 866 (GFTDRAPEKVVQEERDKQADYEQ). Positions 845–863 (FTDRAPEKVVQEERDKQAD) are enriched in basic and acidic residues.

It belongs to the class-I aminoacyl-tRNA synthetase family. ValS type 1 subfamily. In terms of assembly, monomer.

The protein localises to the cytoplasm. The catalysed reaction is tRNA(Val) + L-valine + ATP = L-valyl-tRNA(Val) + AMP + diphosphate. Its function is as follows. Catalyzes the attachment of valine to tRNA(Val). As ValRS can inadvertently accommodate and process structurally similar amino acids such as threonine, to avoid such errors, it has a 'posttransfer' editing activity that hydrolyzes mischarged Thr-tRNA(Val) in a tRNA-dependent manner. The chain is Valine--tRNA ligase from Latilactobacillus sakei subsp. sakei (strain 23K) (Lactobacillus sakei subsp. sakei).